Reading from the N-terminus, the 149-residue chain is uncharacterized protein (149 aa).

The tract at residues 34-94 is disordered; that stretch reads HTPCLPKVPR…NPIGSQRIHS (61 aa). Residues 56–66 show a composition bias toward basic and acidic residues; it reads QSPHRQGDRRR.

The protein localises to the mitochondrion. This is an uncharacterized protein from Arabidopsis thaliana (Mouse-ear cress).